The following is a 119-amino-acid chain: Na(+)/H(+) antiporter subunit G (119 aa).

Helical transmembrane passes span 7–29 (IISIFVLIGGFLSLLGSIGIIRF), 44–61 (TLGVISIMLATFLFFFLV), and 66–88 (VGKLLLTILFVFLTAPVAGMMMG).

Belongs to the CPA3 antiporters (TC 2.A.63) subunit G family. As to quaternary structure, forms a heterooligomeric complex that consists of seven subunits: MrpA, MrpB, MrpC, MrpD, MrpE, MrpF and MrpG.

The protein localises to the cell membrane. Functionally, mnh complex is a Na(+)Li(+)/H(+) antiporter involved in Na(+) and/or Li(+) excretion and Na(+) resistance. Na(+)/H(+) antiport consumes a transmembrane electrical potential, and is thus inferred to be electrogenic. Does not transport K(+), Ca(2+) or Mg(2+). In Alkalihalophilus pseudofirmus (strain ATCC BAA-2126 / JCM 17055 / OF4) (Bacillus pseudofirmus), this protein is Na(+)/H(+) antiporter subunit G (mrpG).